A 232-amino-acid polypeptide reads, in one-letter code: Rho-related GTP-binding protein Rho6 (232 aa).

Residues 23 to 28 (QCGKTA), 38 to 45 (YPETYVPT), 67 to 71 (DTSGS), 125 to 128 (CKTD), and 169 to 170 (AF) contribute to the GTP site. The short motif at 42 to 50 (YVPTVFENY) is the Effector region element. The residue at position 229 (Cys229) is a Cysteine methyl ester. The S-geranylgeranyl cysteine moiety is linked to residue Cys229. A propeptide spans 230–232 (SIM) (removed in mature form).

Belongs to the small GTPase superfamily. Rho family. In terms of assembly, binds GRB7 and PLXNB1. Interacts with PLXNA2. Interacts with UBXD5.

The protein localises to the cell membrane. It localises to the cytoplasm. The protein resides in the cytoskeleton. In terms of biological role, lacks intrinsic GTPase activity. Has a low affinity for GDP, and constitutively binds GTP. Controls rearrangements of the actin cytoskeleton. Induces the Rac-dependent neuritic process formation in part by disruption of the cortical actin filaments. Causes the formation of many neuritic processes from the cell body with disruption of the cortical actin filaments. This Bos taurus (Bovine) protein is Rho-related GTP-binding protein Rho6 (RND1).